Consider the following 103-residue polypeptide: DNA-directed RNA polymerase subunit omega (103 aa).

This sequence belongs to the RNA polymerase subunit omega family. The RNAP catalytic core consists of 2 alpha, 1 beta, 1 beta' and 1 omega subunit. When a sigma factor is associated with the core the holoenzyme is formed, which can initiate transcription.

It catalyses the reaction RNA(n) + a ribonucleoside 5'-triphosphate = RNA(n+1) + diphosphate. Promotes RNA polymerase assembly. Latches the N- and C-terminal regions of the beta' subunit thereby facilitating its interaction with the beta and alpha subunits. The protein is DNA-directed RNA polymerase subunit omega of Streptococcus agalactiae serotype III (strain NEM316).